We begin with the raw amino-acid sequence, 593 residues long: Prospero homeobox protein 2 (593 aa).

Disordered regions lie at residues 24–48, 79–130, 153–199, 260–284, 298–333, and 356–388; these read CMDQERSPATAEAGRDSFPSGQLPS, SPSS…GGTR, TEPR…KDLC, QERSCQGLASEGRNQPSPPGRSAYK, PQAGVPLGNSTLARPLDSPMCPVSPRGVPRSYQSPL, and GRGPDGQWSGSPPQDAAFQSHTSPESAQQPWGL. Over residues 87–99 the composition is skewed to basic and acidic residues; it reads RARESLRCPEKGR. Residues 167–181 show a composition bias toward low complexity; the sequence is PRSSPRARPRNSCSS. A compositionally biased stretch (polar residues) spans 363–380; sequence WSGSPPQDAAFQSHTSPE. One can recognise a Prospero-type homeo domain in the interval 433-491; the sequence is QEGLSPGHLKKAKLMFFFTRYPSSSLLKAYFPDVQFNRCITSQMIKWFSNFREFYYIQM. Positions 433 to 591 are homeo-Prospero; the sequence is QEGLSPGHLK…KSPSFLPGLF (159 aa). Positions 492–591 constitute a Prospero domain; the sequence is EKYARQALSD…KSPSFLPGLF (100 aa).

Belongs to the Prospero homeodomain family. Expressed in testis.

The protein resides in the nucleus. In terms of biological role, transcription regulator. Does not seem to be essential for embryonic development and postnatal survival. This chain is Prospero homeobox protein 2 (Prox2), found in Mus musculus (Mouse).